The chain runs to 98 residues: Defensin-A1 (98 aa).

Positions 1–19 (MQTLSFLLALLFLVAQTPA) are cleaved as a signal peptide. The propeptide occupies 20-62 (QPTGEGEKGGTIQEPEATEAQDTAAVLMAAGAADGDDSDTKQL). 3 disulfides stabilise this stretch: Cys-67–Cys-94, Cys-69–Cys-83, and Cys-73–Cys-93. Positions 97 to 98 (IK) are excised as a propeptide.

It belongs to the alpha-defensin family. In terms of tissue distribution, highly expressed in intestine, and expressed at lower levels in lung and spleen.

Its subcellular location is the secreted. In terms of biological role, has antimicrobial activity. The polypeptide is Defensin-A1 (Ornithorhynchus anatinus (Duckbill platypus)).